Here is a 435-residue protein sequence, read N- to C-terminus: Probable aminotransferase gliI (435 aa).

Lysine 266 carries the N6-(pyridoxal phosphate)lysine modification.

It belongs to the class-I pyridoxal-phosphate-dependent aminotransferase family. Pyridoxal 5'-phosphate serves as cofactor.

It functions in the pathway mycotoxin biosynthesis. Its function is as follows. Probable aminotransferase; part of the gene cluster that mediates the biosynthesis of gliotoxin, a member of the epipolythiodioxopiperazine (ETP) class of toxins characterized by a disulfide bridged cyclic dipeptide. The first step in gliotoxin biosynthesis is the condensation of serine and phenylalanine to form the cyclo-L-phenylalanyl-L-serine diketopiperazine (DKP) by the NRPS gliP. GliP is also able to produce the DKP cyclo-L-tryptophanyl-L-serine, suggesting that the substrate specificity of the first adenylation (A) domain in gliP is sufficiently relaxed to accommodate both L-Phe and L-Trp. The cytochrome P450 monooxygenase gliC has been shown to catalyze the subsequent hydroxylation of the alpha-carbon of L-Phe in cyclo-L-phenylalanyl-L-serine whereas the second cytochrome P450 enzyme, gliF, is presumably involved in the modification of the DKP side chain. The glutathione S-transferase (GST) gliG then forms a bis-glutathionylated biosynthetic intermediate which is responsible for the sulfurization of gliotoxin. This bis-glutathionylated intermediate is subsequently processed by the gamma-glutamyl cyclotransferase gliK to remove both gamma-glutamyl moieties. Subsequent processing via gliI yields a biosynthetic intermediate, which is N-methylated via the N-methyltransferase gliN, before the gliotoxin oxidoreductase gliT-mediated disulfide bridge closure. GliN-mediated amide methylation confers stability to ETP, damping the spontaneous formation of tri- and tetrasulfides. Intracellular dithiol gliotoxin oxidized by gliT is subsequently effluxed by gliA. Gliotoxin contributes to pathogenesis during invasive aspergillosis. In macrophages and neutrophils, gliotoxin showed inhibition of various different cell functions including cytokine production, antigen presentation, phagocytosis, and production of reactive oxygen species. The protein is Probable aminotransferase gliI of Aspergillus fumigatus (strain ATCC MYA-4609 / CBS 101355 / FGSC A1100 / Af293) (Neosartorya fumigata).